The primary structure comprises 196 residues: Somatotropin (196 aa).

A signal peptide spans 1–18 (MEKVVLLLSVLSLGVVCP). Residue glutamine 19 is modified to Pyrrolidone carboxylic acid. Histidine 35 serves as a coordination point for Zn(2+). Cysteine 69 and cysteine 169 form a disulfide bridge. Glutamate 178 lines the Zn(2+) pocket. Cysteine 186 and cysteine 194 are oxidised to a cystine.

The protein belongs to the somatotropin/prolactin family.

The protein localises to the secreted. In terms of biological role, growth hormone plays an important role in growth control and is involved in the regulation of several anabolic processes. Implicated as an osmoregulatory substance important for seawater adaptation. This is Somatotropin (gh) from Siganus guttatus (Orange-spotted spinefoot).